A 155-amino-acid polypeptide reads, in one-letter code: Pathogenesis-related protein STH-2 (155 aa).

Belongs to the BetVI family.

In Solanum tuberosum (Potato), this protein is Pathogenesis-related protein STH-2 (STH-2).